Here is a 229-residue protein sequence, read N- to C-terminus: 2,3-bisphosphoglycerate-dependent phosphoglycerate mutase (229 aa).

Substrate contacts are provided by residues 7 to 14 (RHGQSEWN), 20 to 21 (TG), Arg-59, 86 to 89 (ERHY), Lys-97, 113 to 114 (RR), and 182 to 183 (GN). His-8 (tele-phosphohistidine intermediate) is an active-site residue. Glu-86 functions as the Proton donor/acceptor in the catalytic mechanism.

The protein belongs to the phosphoglycerate mutase family. BPG-dependent PGAM subfamily.

It catalyses the reaction (2R)-2-phosphoglycerate = (2R)-3-phosphoglycerate. The protein operates within carbohydrate degradation; glycolysis; pyruvate from D-glyceraldehyde 3-phosphate: step 3/5. Functionally, catalyzes the interconversion of 2-phosphoglycerate and 3-phosphoglycerate. The sequence is that of 2,3-bisphosphoglycerate-dependent phosphoglycerate mutase from Listeria welshimeri serovar 6b (strain ATCC 35897 / DSM 20650 / CCUG 15529 / CIP 8149 / NCTC 11857 / SLCC 5334 / V8).